Consider the following 542-residue polypeptide: Nuclear speckle splicing regulatory protein 1 (542 aa).

A disordered region spans residues 21 to 53 (RVLQKPSVFGSDSDDDETSVSESLQREAAKKQA). Phosphoserine is present on residues Ser-27, Ser-31, and Ser-33. Residues 103–172 (IHNLLKAVEI…RAAALEAHLD (70 aa)) are a coiled coil. Residues 105 to 169 (NLLKAVEIRK…REKRAAALEA (65 aa)) are necessary for alternative splicing activity. Residues 190-516 (AVGEEAAPKS…FAKRSNEETV (327 aa)) are disordered. Residues Lys-198 and Lys-209 each participate in a glycyl lysine isopeptide (Lys-Gly) (interchain with G-Cter in SUMO2) cross-link. Positions 200-217 (SFREARTVIKEEKLRGYP) are enriched in basic and acidic residues. Residues 223 to 232 (ESRPPQQSCV) show a composition bias toward polar residues. Residues 239–256 (EAEENPDADREFDDESSE) are compositionally biased toward acidic residues. A phosphoserine mark is found at Ser-254 and Ser-255. Over residues 257–271 (DGEKRDHKVKSRGED) the composition is skewed to basic and acidic residues. Lys-277 is subject to N6-acetyllysine. The span at 277-288 (KHPKHHKNRAHS) shows a compositional bias: basic residues. A Glycyl lysine isopeptide (Lys-Gly) (interchain with G-Cter in SUMO2) cross-link involves residue Lys-280. Composition is skewed to basic and acidic residues over residues 309–335 (RGHE…EEKS), 343–475 (SHKD…KPSH), and 485–501 (RLAE…ERPP). The stretch at 372–413 (KREKYSSREQERDRQRNDHDRYSEKEKKRKEKEEHTKARRER) forms a coiled coil. Ser-443 is modified (phosphoserine).

Belongs to the NSRP1 family. As to quaternary structure, interacts (via C-terminus) with SRSF1. Interacts (via C-terminus) with SRSF2.

Its subcellular location is the nucleus. The protein resides in the nucleus speckle. In terms of biological role, RNA-binding protein that mediates pre-mRNA alternative splicing regulation. The protein is Nuclear speckle splicing regulatory protein 1 (Nsrp1) of Mus musculus (Mouse).